A 297-amino-acid chain; its full sequence is Alpha-tubulin N-acetyltransferase 1 (297 aa).

The N-acetyltransferase domain occupies Met1–Phe184. Residues Phe118–Ser131 and Ser154–Lys163 contribute to the acetyl-CoA site. Residues Phe226–His297 form a disordered region. Residues Gly230–Pro240 show a composition bias toward pro residues. The segment covering Ser241–Ala264 has biased composition (low complexity). Composition is skewed to polar residues over residues Val266–Asn278 and Thr286–His297.

The protein belongs to the acetyltransferase ATAT1 family. In terms of assembly, monomer.

It is found in the cytoplasm. It localises to the membrane. Its subcellular location is the clathrin-coated pit. The protein resides in the cell junction. The protein localises to the focal adhesion. It is found in the cell projection. It localises to the axon. Its subcellular location is the cytoskeleton. The protein resides in the spindle. It catalyses the reaction L-lysyl-[alpha-tubulin] + acetyl-CoA = N(6)-acetyl-L-lysyl-[alpha-tubulin] + CoA + H(+). Its function is as follows. Specifically acetylates 'Lys-40' in alpha-tubulin on the lumenal side of microtubules. Promotes microtubule destabilization and accelerates microtubule dynamics; this activity may be independent of acetylation activity. Acetylates alpha-tubulin with a slow enzymatic rate, due to a catalytic site that is not optimized for acetyl transfer. Enters the microtubule through each end and diffuses quickly throughout the lumen of microtubules. Acetylates only long/old microtubules because of its slow acetylation rate since it does not have time to act on dynamically unstable microtubules before the enzyme is released. May be involved in neuron development. Acetylates alpha-tubulin in neurons, but not in cilia. This chain is Alpha-tubulin N-acetyltransferase 1, found in Danio rerio (Zebrafish).